The following is a 522-amino-acid chain: Monogalactosyldiacylglycerol synthase, chloroplastic (522 aa).

A chloroplast-targeting transit peptide spans 1-98; that stretch reads MSHPSTVTSE…RIPLGFSSIG (98 aa).

Belongs to the glycosyltransferase 28 family. In terms of assembly, homodimer. The cofactor is Zn(2+).

Its subcellular location is the plastid. The protein localises to the chloroplast inner membrane. The catalysed reaction is a 1,2-diacyl-sn-glycerol + UDP-alpha-D-galactose = a 1,2-diacyl-3-O-(beta-D-galactosyl)-sn-glycerol + UDP + H(+). With respect to regulation, inhibited by ortho-phenanthroline and UDP (competitive inhibitor relatively to UDP-Gal only) and inactivated by citraconic anhydride, tert-butoxycarbonyl-L-methionine hydrosuccinimidyl ester (SLR) and N-ethylmaleimide (NEM). Functionally, involved in the synthesis of the major structural component of photosynthetic membranes. The 1,2-diacylglycerol substrate preference is 18:2/18:2 &gt; 18:0/18:1 &gt; 18:1/18:1 &gt; 18:1/16:0 &gt; 16:0/18:2 &gt; 18:3/18:3 &gt; 16:0/18:1 &gt; 16:0/16:0 &gt; 18:0/18:0. The polypeptide is Monogalactosyldiacylglycerol synthase, chloroplastic (MGD A) (Spinacia oleracea (Spinach)).